Here is a 185-residue protein sequence, read N- to C-terminus: Elongation factor P (185 aa).

The protein belongs to the elongation factor P family.

It localises to the cytoplasm. It participates in protein biosynthesis; polypeptide chain elongation. In terms of biological role, involved in peptide bond synthesis. Stimulates efficient translation and peptide-bond synthesis on native or reconstituted 70S ribosomes in vitro. Probably functions indirectly by altering the affinity of the ribosome for aminoacyl-tRNA, thus increasing their reactivity as acceptors for peptidyl transferase. In Alkaliphilus metalliredigens (strain QYMF), this protein is Elongation factor P.